Reading from the N-terminus, the 589-residue chain is MQFSVLAGSLEKMESTAKRLELTGILEELLRETPHEVIAQIVYLIQGKLRPEFEGIELGVAEKLAVRAVSKSSGMPAARIEAAYRRDGDLGRAASSILEQKTQTTFLAEEITVERVYDTLMRIARLEGARSQDMKMRHISSLLNDASPRDACYILKLILGTLRLGIAENTVMDALAAAFTGSKSNRPELERAYNVSSDLGRVAEAVSSGGLEAVRGFAVAVFSPIRPMLADRVRSESEALEKMGAGLAAEYKLDGERVQVHLSGGRVELFSRSLENITAYYPDIVERIPGRLRAREAVLEAEAVAVNEETGEFLPFQELMHRRRKYDIDKAVMRYPITVNFFDILYLDGRDCLGISYSERRALLEGVVDEDSFARCVPVSTIPDESALEDSLENSINAGCEGLMLKLPDAPYRAGSRGGYWLKLKREYRNELGDSLDLVIIGAFFGKGRRTGRYGTLLLATYDDSRDTFPSICKVGTGFTDEDLDQLYQLLSPRVTLKRNPRIDSGMEADVWFDPEVVMEVVASEITLSPVHKTALDSVRKGAGLALRFPKFTGKLRTEKTAEDASTDQEVIALYKSQKKVVPDGQPGV.

Residue E250 coordinates ATP. The N6-AMP-lysine intermediate role is filled by K252. Positions 257, 272, 302, 342, 417, and 423 each coordinate ATP.

It belongs to the ATP-dependent DNA ligase family. The cofactor is Mg(2+).

The enzyme catalyses ATP + (deoxyribonucleotide)n-3'-hydroxyl + 5'-phospho-(deoxyribonucleotide)m = (deoxyribonucleotide)n+m + AMP + diphosphate.. In terms of biological role, DNA ligase that seals nicks in double-stranded DNA during DNA replication, DNA recombination and DNA repair. In Cenarchaeum symbiosum (strain A), this protein is DNA ligase.